Reading from the N-terminus, the 351-residue chain is 3-hydroxy-4-methyl-anthranilyl-[aryl-carrier protein] 5-monooxygenase (351 aa).

Belongs to the aromatic-ring hydroxylase family. Requires FAD as cofactor.

It carries out the reaction 3-hydroxy-4-methylanthranilyl-[aryl-carrier protein] + NADH + O2 + H(+) = 3,5-dihydroxy-4-methylanthranilyl-[aryl-carrier protein] + NAD(+) + H2O. It functions in the pathway antibiotic biosynthesis. Functionally, involved in the biosynthesis of the antitumor antibiotic sibiromycin. Hydroxylates the C5 position of the peptidyl carrier protein (PCP)-bound 4-methyl-3-hydroxyanthranilic acid (4-MHA or 3H4MAA), leading to the formation of the fully substituted anthranilate moiety found in sibiromycin. This is 3-hydroxy-4-methyl-anthranilyl-[aryl-carrier protein] 5-monooxygenase from Streptosporangium sibiricum.